We begin with the raw amino-acid sequence, 178 residues long: ATP synthase subunit delta (178 aa).

This sequence belongs to the ATPase delta chain family. As to quaternary structure, F-type ATPases have 2 components, F(1) - the catalytic core - and F(0) - the membrane proton channel. F(1) has five subunits: alpha(3), beta(3), gamma(1), delta(1), epsilon(1). F(0) has three main subunits: a(1), b(2) and c(10-14). The alpha and beta chains form an alternating ring which encloses part of the gamma chain. F(1) is attached to F(0) by a central stalk formed by the gamma and epsilon chains, while a peripheral stalk is formed by the delta and b chains.

The protein localises to the cell inner membrane. Its function is as follows. F(1)F(0) ATP synthase produces ATP from ADP in the presence of a proton or sodium gradient. F-type ATPases consist of two structural domains, F(1) containing the extramembraneous catalytic core and F(0) containing the membrane proton channel, linked together by a central stalk and a peripheral stalk. During catalysis, ATP synthesis in the catalytic domain of F(1) is coupled via a rotary mechanism of the central stalk subunits to proton translocation. This protein is part of the stalk that links CF(0) to CF(1). It either transmits conformational changes from CF(0) to CF(1) or is implicated in proton conduction. The chain is ATP synthase subunit delta from Pseudomonas syringae pv. syringae (strain B728a).